Reading from the N-terminus, the 143-residue chain is Papain inhibitor (143 aa).

Residues 1–33 (MREFRRVRRVRFAACALVAAATGITLAAGPASA) form the signal peptide.

As to quaternary structure, monomer.

The protein resides in the secreted. Functionally, stress protein produced under hyperthermal stress conditions. Serves as a glutamine and lysine donor substrate for transglutaminase. Inhibits the cysteine proteases papain and bromelain as well as the bovine serine protease trypsin. Has hardly any or no effect on subtilisin, bovine chymotrypsin, proteinase K from T.album, transglutaminase-activating metalloproteinase (TAMEP) from S.mobaraensis, dispase from B.polymyxa, thermolysin from B.thermoproteolyticus or collagenase from C.histolyticum. This chain is Papain inhibitor (pi), found in Streptomyces mobaraensis (Streptoverticillium mobaraense).